The chain runs to 314 residues: Acetaldehyde dehydrogenase 1 (314 aa).

11 to 14 (SGNI) provides a ligand contact to NAD(+). The active-site Acyl-thioester intermediate is cysteine 129. Residues 160–168 (SAGPGTRAN) and asparagine 292 each bind NAD(+).

This sequence belongs to the acetaldehyde dehydrogenase family.

The enzyme catalyses acetaldehyde + NAD(+) + CoA = acetyl-CoA + NADH + H(+). This is Acetaldehyde dehydrogenase 1 from Nocardioides sp. (strain ATCC BAA-499 / JS614).